Consider the following 520-residue polypeptide: Putative tyrosine carboxypeptidase MATCAP2 (520 aa).

The segment at 116–153 (EEKKYHSQKQSSSTYSKRCRKPSKSPNTSRSKDPRRMK) is disordered. H331 provides a ligand contact to Zn(2+). Residue E332 is the Nucleophile of the active site. H336 and E367 together coordinate Zn(2+).

Zn(2+) serves as cofactor.

Functionally, putative tyrosine carboxypeptidase. The chain is Putative tyrosine carboxypeptidase MATCAP2 from Homo sapiens (Human).